A 418-amino-acid polypeptide reads, in one-letter code: F-box protein At5g03970 (418 aa).

The F-box domain occupies 18-66 (STHEVLNSNDTMCEILILLPPETIYKLILVSKRWLEIIASPCFRHTYLA).

In Arabidopsis thaliana (Mouse-ear cress), this protein is F-box protein At5g03970.